Reading from the N-terminus, the 314-residue chain is 2,3-dihydroxyphenylpropionate/2,3-dihydroxicinnamic acid 1,2-dioxygenase (314 aa).

His-115 functions as the Proton donor in the catalytic mechanism. The Proton acceptor role is filled by His-179.

Belongs to the LigB/MhpB extradiol dioxygenase family. Homotetramer. Requires Fe(2+) as cofactor.

The enzyme catalyses 3-(2,3-dihydroxyphenyl)propanoate + O2 = (2Z,4E)-2-hydroxy-6-oxonona-2,4-dienedioate + H(+). The catalysed reaction is (2E)-3-(2,3-dihydroxyphenyl)prop-2-enoate + O2 = (2Z,4E,7E)-2-hydroxy-6-oxonona-2,4,7-trienedioate + H(+). It participates in aromatic compound metabolism; 3-phenylpropanoate degradation. Its function is as follows. Catalyzes the non-heme iron(II)-dependent oxidative cleavage of 2,3-dihydroxyphenylpropionic acid and 2,3-dihydroxicinnamic acid into 2-hydroxy-6-ketononadienedioate and 2-hydroxy-6-ketononatrienedioate, respectively. In Rhodococcus globerulus, this protein is 2,3-dihydroxyphenylpropionate/2,3-dihydroxicinnamic acid 1,2-dioxygenase.